A 425-amino-acid polypeptide reads, in one-letter code: Adenylosuccinate synthetase (425 aa).

GTP contacts are provided by residues 12 to 18 (GDEGKGK) and 40 to 42 (GHT). D13 (proton acceptor) is an active-site residue. The Mg(2+) site is built by D13 and G40. IMP contacts are provided by residues 13–16 (DEGK), 38–41 (NAGH), T127, R141, Q222, T237, and R301. H41 acts as the Proton donor in catalysis. Position 297–303 (297–303 (AVTGRPR)) interacts with substrate. Residues R303, 329–331 (KID), and 411–413 (SVG) contribute to the GTP site.

This sequence belongs to the adenylosuccinate synthetase family. Homodimer. It depends on Mg(2+) as a cofactor.

It localises to the cytoplasm. The catalysed reaction is IMP + L-aspartate + GTP = N(6)-(1,2-dicarboxyethyl)-AMP + GDP + phosphate + 2 H(+). The protein operates within purine metabolism; AMP biosynthesis via de novo pathway; AMP from IMP: step 1/2. Functionally, plays an important role in the de novo pathway of purine nucleotide biosynthesis. Catalyzes the first committed step in the biosynthesis of AMP from IMP. This chain is Adenylosuccinate synthetase, found in Fusobacterium nucleatum.